We begin with the raw amino-acid sequence, 397 residues long: Putative F-box protein At2g04810 (397 aa).

Residues 20–68 (SDWSKLCPDVLRKIYETLRSPVDSHRAKIVCSNWYSVWKTCVKRPLCPL) form the F-box domain.

The sequence is that of Putative F-box protein At2g04810 from Arabidopsis thaliana (Mouse-ear cress).